Reading from the N-terminus, the 206-residue chain is Guanylate kinase (206 aa).

A Guanylate kinase-like domain is found at 7–185 (GIVLVLCAPS…AYDELRAAYL (179 aa)). 14–21 (APSGTGKT) contributes to the ATP binding site.

The protein belongs to the guanylate kinase family.

It localises to the cytoplasm. The catalysed reaction is GMP + ATP = GDP + ADP. Functionally, essential for recycling GMP and indirectly, cGMP. The chain is Guanylate kinase from Oleidesulfovibrio alaskensis (strain ATCC BAA-1058 / DSM 17464 / G20) (Desulfovibrio alaskensis).